A 274-amino-acid chain; its full sequence is 2,3,4,5-tetrahydropyridine-2,6-dicarboxylate N-succinyltransferase (274 aa).

The substrate site is built by Arg104 and Asp141.

The protein belongs to the transferase hexapeptide repeat family. In terms of assembly, homotrimer.

Its subcellular location is the cytoplasm. The enzyme catalyses (S)-2,3,4,5-tetrahydrodipicolinate + succinyl-CoA + H2O = (S)-2-succinylamino-6-oxoheptanedioate + CoA. It functions in the pathway amino-acid biosynthesis; L-lysine biosynthesis via DAP pathway; LL-2,6-diaminopimelate from (S)-tetrahydrodipicolinate (succinylase route): step 1/3. The chain is 2,3,4,5-tetrahydropyridine-2,6-dicarboxylate N-succinyltransferase from Enterobacter sp. (strain 638).